Here is a 104-residue protein sequence, read N- to C-terminus: Flagellar hook-basal body complex protein FliE (104 aa).

Belongs to the FliE family.

It is found in the bacterial flagellum basal body. The sequence is that of Flagellar hook-basal body complex protein FliE from Enterobacter sp. (strain 638).